The chain runs to 202 residues: ATP-dependent Clp protease proteolytic subunit (202 aa).

Ser106 (nucleophile) is an active-site residue. His131 is an active-site residue.

Belongs to the peptidase S14 family. In terms of assembly, fourteen ClpP subunits assemble into 2 heptameric rings which stack back to back to give a disk-like structure with a central cavity, resembling the structure of eukaryotic proteasomes.

It is found in the cytoplasm. It catalyses the reaction Hydrolysis of proteins to small peptides in the presence of ATP and magnesium. alpha-casein is the usual test substrate. In the absence of ATP, only oligopeptides shorter than five residues are hydrolyzed (such as succinyl-Leu-Tyr-|-NHMec, and Leu-Tyr-Leu-|-Tyr-Trp, in which cleavage of the -Tyr-|-Leu- and -Tyr-|-Trp bonds also occurs).. Cleaves peptides in various proteins in a process that requires ATP hydrolysis. Has a chymotrypsin-like activity. Plays a major role in the degradation of misfolded proteins. The chain is ATP-dependent Clp protease proteolytic subunit from Shewanella sp. (strain W3-18-1).